A 243-amino-acid chain; its full sequence is uncharacterized protein (243 aa).

Positions 1–18 are enriched in low complexity; it reads MSNSHYNNYQQQQPHSSN. Residues 1 to 30 are disordered; that stretch reads MSNSHYNNYQQQQPHSSNGDPEYQHQQMVH. Residues 38-232 form the AMMECR1 domain; that stretch reads GHGMKTVAVP…MHYKEYREYQ (195 aa).

This is an uncharacterized protein from Drosophila melanogaster (Fruit fly).